A 152-amino-acid chain; its full sequence is MSLVIPEKFQHILRIMNTNIDGKRKVGIAMTAIKGVGRRYSNIVLKKADVDLTKRAGECTEEEVDKVVTIISNPLQYKVPNWFLNRQKDIIDGKYWQLTSSNLDSKLRDDLERLKKIRSHRGLRHYWGLRVRGQHTKTTGRRGRTVGVSKKK.

S41 carries the phosphoserine modification.

It belongs to the universal ribosomal protein uS13 family.

It is found in the cytoplasm. Its function is as follows. Located at the top of the head of the 40S subunit, it contacts several helices of the 18S rRNA. The sequence is that of Small ribosomal subunit protein uS13 (RpS18) from Drosophila melanogaster (Fruit fly).